Here is a 510-residue protein sequence, read N- to C-terminus: Inositol-3-phosphate synthase (510 aa).

Residues Gly-70, Gly-71, Asn-72, Asn-73, Asp-143, Ile-180, Gln-190, Arg-193, Thr-230, Ala-231, Asn-232, Thr-233, Gly-281, Ser-282, Asp-306, Ser-309, Asn-340, Asn-341, Asp-342, Lys-355, Gly-393, Asp-394, Asp-422, and Ser-423 each coordinate NAD(+).

The protein belongs to the myo-inositol 1-phosphate synthase family. NAD(+) is required as a cofactor.

It localises to the cytoplasm. The protein resides in the cytosol. The protein localises to the nucleus. The enzyme catalyses D-glucose 6-phosphate = 1D-myo-inositol 3-phosphate. It participates in polyol metabolism; myo-inositol biosynthesis; myo-inositol from D-glucose 6-phosphate: step 1/2. Key enzyme in myo-inositol biosynthesis pathway that catalyzes the conversion of glucose 6-phosphate to 1-myo-inositol 1-phosphate in a NAD-dependent manner. This chain is Inositol-3-phosphate synthase, found in Zea mays (Maize).